We begin with the raw amino-acid sequence, 293 residues long: Foldase protein PrsA 2 (293 aa).

The signal sequence occupies residues 1–20 (MKKKLILGLVMMMALFSLAA). Cys-21 carries N-palmitoyl cysteine lipidation. A lipid anchor (S-diacylglycerol cysteine) is attached at Cys-21. The region spanning 135–226 (QPDITVSHIL…YGYHIIQMDK (92 aa)) is the PpiC domain.

Belongs to the PrsA family.

It localises to the cell membrane. The catalysed reaction is [protein]-peptidylproline (omega=180) = [protein]-peptidylproline (omega=0). Functionally, plays a major role in protein secretion by helping the post-translocational extracellular folding of several secreted proteins. The sequence is that of Foldase protein PrsA 2 from Listeria monocytogenes serotype 4b (strain F2365).